Here is a 455-residue protein sequence, read N- to C-terminus: T-box protein VegT (455 aa).

Positions 57 to 230 (LWAQFHQEGT…HNPFAKGFRE (174 aa)) form a DNA-binding region, T-box. A compositionally biased stretch (basic and acidic residues) spans 229 to 241 (REQERSHKRDDVL). Disordered regions lie at residues 229 to 276 (REQE…RVKE) and 295 to 360 (ANQG…PDSD). The segment covering 308–326 (GANQEQQVPSSSSNFYNRN) has biased composition (polar residues).

Forms a repression complex on the promoters of the nodal/nr1 and siamois genes with the maternal factors tcf7l1/tcf3 and pouf5.1/oct-25. Interacts (via C-terminus) with tcf7l1/tcf3 (via N-terminus). Also interacts with the other POU-domain transcription factors pou5f1.2/oct-91 and pou5f1.3/oct-60. Vegetally localized in oocytes and expressed in the presumptive endoderm and mesoderm at early gastrula stage. Expression is down-regulated in the endoderm by the end of gastrulation but maintained in the lateral and ventral mesoderm of the blastopore lip.

Its subcellular location is the nucleus. Its function is as follows. Transcription factor required for both mesoderm and endoderm formation in the embryo; signaling determinants and concentration levels may determine which germ layer is formed. Acts together with beta-catenin to activate genes that are responsible for mesoderm induction including wnt-8, eomes t/bra, siamois, mix1 and sox17. Directly binds to promoter DNA. Patterns the mesoderm along the dorsoventral and posterior axis. Activates siamois gene transcription when alone or in combination with beta-catenin, but inhibits siamois transcription in combination with pou5f1.1/oct-25. The polypeptide is T-box protein VegT (Xenopus tropicalis (Western clawed frog)).